We begin with the raw amino-acid sequence, 116 residues long: PTS system cellobiose-specific EIIA component (116 aa).

One can recognise a PTS EIIA type-3 domain in the interval 11–109; that stretch reads DDYMGVVMGI…AVEVVGQEQR (99 aa). His85 (tele-phosphohistidine intermediate) is an active-site residue. A Phosphohistidine; by HPr modification is found at His85. Asp88 contributes to the Mg(2+) binding site.

As to quaternary structure, homotrimer. The cofactor is Mg(2+).

In terms of biological role, the phosphoenolpyruvate-dependent sugar phosphotransferase system (sugar PTS), a major carbohydrate active transport system, catalyzes the phosphorylation of incoming sugar substrates concomitantly with their translocation across the cell membrane. Involved in cellobiose transport with PtcB and CelB. This system can also transport lactose. The sequence is that of PTS system cellobiose-specific EIIA component from Lactococcus lactis subsp. lactis (strain IL1403) (Streptococcus lactis).